Reading from the N-terminus, the 195-residue chain is GTP-dependent dephospho-CoA kinase (195 aa).

5 residues coordinate GTP: D49, V50, D68, E127, and D150.

It belongs to the GTP-dependent DPCK family.

It catalyses the reaction 3'-dephospho-CoA + GTP = GDP + CoA + H(+). The protein operates within cofactor biosynthesis; coenzyme A biosynthesis. Functionally, catalyzes the GTP-dependent phosphorylation of the 3'-hydroxyl group of dephosphocoenzyme A to form coenzyme A (CoA). The chain is GTP-dependent dephospho-CoA kinase from Methanosarcina acetivorans (strain ATCC 35395 / DSM 2834 / JCM 12185 / C2A).